A 102-amino-acid polypeptide reads, in one-letter code: Monothiol glutaredoxin-S9 (102 aa).

Residues 1–101 (MDKVVRMSSE…PLVKPFQANL (101 aa)) form the Glutaredoxin domain. Cys21 contacts [2Fe-2S] cluster.

This sequence belongs to the glutaredoxin family. CC-type subfamily.

It is found in the cytoplasm. In terms of biological role, may only reduce GSH-thiol disulfides, but not protein disulfides. The sequence is that of Monothiol glutaredoxin-S9 (GRXS9) from Arabidopsis thaliana (Mouse-ear cress).